Reading from the N-terminus, the 84-residue chain is MAKTKAGGSTKNGRDSAGRRLGQKIGDGQFALTGSIIYRQRGTRIYPGKNVGIGNDDSLFALVDGIVKFQKIRKRKYATVVMAK.

A disordered region spans residues 1-22 (MAKTKAGGSTKNGRDSAGRRLG).

It belongs to the bacterial ribosomal protein bL27 family.

The chain is Large ribosomal subunit protein bL27 from Mesomycoplasma hyopneumoniae (strain 232) (Mycoplasma hyopneumoniae).